A 91-amino-acid polypeptide reads, in one-letter code: Proline, histidine and glycine-rich protein 1 (91 aa).

The interval 1–91 (MHPGGKGHCG…HCGPHPGPHH (91 aa)) is disordered. 3 stretches are compositionally biased toward gly residues: residues 33 to 42 (HPGHGPGHCP), 49 to 63 (GHGG…GHCP), and 70 to 82 (GHGG…GPGH).

This Mus musculus (Mouse) protein is Proline, histidine and glycine-rich protein 1 (Phgr1).